Reading from the N-terminus, the 37-residue chain is Cytochrome b6-f complex subunit 5 (37 aa).

Residues L5 to A25 traverse the membrane as a helical segment.

The protein belongs to the PetG family. As to quaternary structure, the 4 large subunits of the cytochrome b6-f complex are cytochrome b6, subunit IV (17 kDa polypeptide, PetD), cytochrome f and the Rieske protein, while the 4 small subunits are PetG, PetL, PetM and PetN. The complex functions as a dimer.

The protein resides in the plastid. The protein localises to the chloroplast thylakoid membrane. Functionally, component of the cytochrome b6-f complex, which mediates electron transfer between photosystem II (PSII) and photosystem I (PSI), cyclic electron flow around PSI, and state transitions. PetG is required for either the stability or assembly of the cytochrome b6-f complex. This chain is Cytochrome b6-f complex subunit 5, found in Thalassiosira pseudonana (Marine diatom).